A 147-amino-acid polypeptide reads, in one-letter code: Hordoindoline-B1 (147 aa).

A signal peptide spans 1–19; that stretch reads MKTLFLLAILALVASTTFA. A propeptide spanning residues 20–28 is cleaved from the precursor; the sequence is QYSVGGGYN.

In terms of processing, five disulfide bonds are present. Found in endosperm and aleurone layer of developing kernels, but not in the embryo.

Its subcellular location is the membrane. The protein localises to the secreted. It is found in the extracellular space. Its function is as follows. Acts as a membranotoxin, probably through its antibacterial and antifungal activities, contributing to the defense mechanism of the plant against predators. Forms monovalent cation-selective ion channels in membranes. Contributes to grain texture and hardness. The sequence is that of Hordoindoline-B1 (HINB-1) from Hordeum vulgare (Barley).